The chain runs to 84 residues: U8-theraphotoxin-Hhn1e (84 aa).

The signal sequence occupies residues 1-21 (MKVVLLVCLVWMMAMMELVSC). 5 cysteine pairs are disulfide-bonded: cysteine 23-cysteine 35, cysteine 29-cysteine 44, cysteine 34-cysteine 67, cysteine 54-cysteine 75, and cysteine 69-cysteine 81.

Belongs to the AVIT (prokineticin) family. As to expression, expressed by the venom gland.

It localises to the secreted. This Cyriopagopus hainanus (Chinese bird spider) protein is U8-theraphotoxin-Hhn1e.